Consider the following 182-residue polypeptide: UPF0397 protein BT9727_2423 (182 aa).

5 consecutive transmembrane segments (helical) span residues 9–29 (VVAI…GFSI), 40–60 (AILT…IGLI), 71–91 (WGIW…MGFI), 114–134 (ITGL…DIIV), and 142–162 (IVIQ…VLGL).

Belongs to the UPF0397 family.

It is found in the cell membrane. The protein is UPF0397 protein BT9727_2423 of Bacillus thuringiensis subsp. konkukian (strain 97-27).